Consider the following 576-residue polypeptide: K(+)/H(+) antiporter NhaP2 (576 aa).

The next 13 helical transmembrane spans lie at 6–26 (INSF…LSPM), 34–54 (ILLI…GGIL), 58–78 (YSTA…DGGM), 87–107 (VALW…TSIT), 109–129 (MMAA…GAIV), 163–183 (PMAV…DTEM), 185–205 (FSFM…LGLG), 219–239 (LADG…YAAS), 242–262 (LGGS…NKPT), 271–291 (VLDG…GLLL), 299–319 (ILIP…PVAV), 335–355 (WFIS…VFPM), and 359–379 (LPGA…SLLV). Positions 405–486 (SGVEIYPSSE…LEALSNLFSQ (82 aa)) constitute an RCK C-terminal domain.

Belongs to the monovalent cation:proton antiporter 1 (CPA1) transporter (TC 2.A.36) family. NhaP2 subfamily.

It localises to the cell inner membrane. It carries out the reaction K(+)(in) + H(+)(out) = K(+)(out) + H(+)(in). Functionally, k(+)/H(+) antiporter that extrudes potassium in exchange for external protons and maintains the internal concentration of potassium under toxic levels. The chain is K(+)/H(+) antiporter NhaP2 from Shewanella baltica (strain OS195).